The sequence spans 232 residues: Ubiquinone biosynthesis O-methyltransferase (232 aa).

Residues Arg36, Gly55, Asp76, and Leu120 each coordinate S-adenosyl-L-methionine.

The protein belongs to the methyltransferase superfamily. UbiG/COQ3 family.

It catalyses the reaction a 3-demethylubiquinol + S-adenosyl-L-methionine = a ubiquinol + S-adenosyl-L-homocysteine + H(+). The enzyme catalyses a 3-(all-trans-polyprenyl)benzene-1,2-diol + S-adenosyl-L-methionine = a 2-methoxy-6-(all-trans-polyprenyl)phenol + S-adenosyl-L-homocysteine + H(+). The protein operates within cofactor biosynthesis; ubiquinone biosynthesis. O-methyltransferase that catalyzes the 2 O-methylation steps in the ubiquinone biosynthetic pathway. This chain is Ubiquinone biosynthesis O-methyltransferase, found in Stutzerimonas stutzeri (strain A1501) (Pseudomonas stutzeri).